Reading from the N-terminus, the 237-residue chain is Purine nucleoside phosphorylase DeoD-type (237 aa).

Residue H4 participates in a purine D-ribonucleoside binding. Phosphate contacts are provided by residues G20, R24, R43, and 87 to 90 (RVGT). A purine D-ribonucleoside is bound by residues 180-182 (EME) and 204-205 (SD). D205 (proton donor) is an active-site residue.

It belongs to the PNP/UDP phosphorylase family. Homohexamer; trimer of homodimers.

The catalysed reaction is a purine D-ribonucleoside + phosphate = a purine nucleobase + alpha-D-ribose 1-phosphate. The enzyme catalyses a purine 2'-deoxy-D-ribonucleoside + phosphate = a purine nucleobase + 2-deoxy-alpha-D-ribose 1-phosphate. Functionally, catalyzes the reversible phosphorolytic breakdown of the N-glycosidic bond in the beta-(deoxy)ribonucleoside molecules, with the formation of the corresponding free purine bases and pentose-1-phosphate. The protein is Purine nucleoside phosphorylase DeoD-type of Streptococcus suis (strain 98HAH33).